A 530-amino-acid chain; its full sequence is Cytochrome P450 78A6 (530 aa).

The helical transmembrane segment at 25–45 (LAFSLLAVTIIWLAISLFLWT) threads the bilayer. C474 contacts heme.

The protein belongs to the cytochrome P450 family. It depends on heme as a cofactor. In terms of tissue distribution, expressed in leaves, sepals, petals, stamens, carpels and developing ovules.

It is found in the membrane. Functionally, plays a role in seed and fruit development. Functions probably in association with CYP78A9 in the regulation of seed growth. Acts maternally to promote seed growth. The chain is Cytochrome P450 78A6 (CYP78A6) from Arabidopsis thaliana (Mouse-ear cress).